The chain runs to 607 residues: CRISPR-associated DNA-binding protein Cas12m (607 aa).

Residues 1-16 (MTRVTVQTAGVHYKWQ) are wedge domain (WED-N). A recognition domain (REC) region spans residues 17–189 (MPDQLTQQLR…QLRHHRWDGT (173 aa)). Residues 50 to 124 (WSSYPAVAAL…IASVRDEATE (75 aa)) form a roof in REC region. The span at 74-83 (ASTVKEEKSR) shows a compositional bias: basic and acidic residues. Residues 74–94 (ASTVKEEKSRQRTKRPSHPAV) are disordered. The segment at 190–315 (GTISVQLQRQ…KIPDQGEVDE (126 aa)) is wedge domain (WED-C). The ruvC-I stretch occupies residues 316 to 559 (GPTIAVHLGW…TVSHTGLSRV (244 aa)). The segment at 391-452 (SIRDTLVAWL…EGADIAETLE (62 aa)) is ruvC insertion. The target nucleic-acid binding (TNB) stretch occupies residues 552-588 (SHTGLSRVHAACGHENPADDRYLMQPVLCDGCGRTYD). Residues H560, C563, C580, and C583 each contribute to the Zn(2+) site. Positions 589–607 (TDLSATILMLQRASAATSN) are ruvC-II. Position 590 (D590) interacts with Mg(2+).

The protein belongs to the CRISPR-associated DNA-binding protein Cas12m family. Binds crRNA and target dsDNA as a monomer. Mg(2+) serves as cofactor. The cofactor is Zn(2+).

Its function is as follows. CRISPR (clustered regularly interspaced short palindromic repeat), is an adaptive immune system that provides protection against mobile genetic elements (viruses, transposable elements and conjugative plasmids). CRISPR clusters contain sequences complementary to antecedent mobile elements and target invading nucleic acids. CRISPR clusters are transcribed and processed into CRISPR RNA (crRNA). Recognizes a short motif in the CRISPR repeat sequences (the 5' PAM or protospacer adjacent motif, 5'-TTN-3' in this organism) to help distinguish self versus nonself, as targets within the bacterial CRISPR locus do not have PAMs. Upon expression in E.coli as a CRISPR locus inhibits plasmid propagation when targeted to regions essential for plasmid propagation (replication origin and a selectable marker); inhibits expression of a non-selectable marker, probably at the transcriptional level. Protects E.coli against bacteriophage M13mp18, to a lesser extent against lambda and VpaE1 as well as phage T4 with hydroxymethyl or unmodified (but not glycosylated) cytosines. Preferentially binds to its associated crRNA. Cas12m-crRNA binds DNA in a PAM-dependent, crRNA-guided fashion. Binds a 20-bp crRNA-ss-target DNA heteroduplex, in a 52 nucleotide crRNA. No dsDNA, ssDNA or RNA nuclease activity is seen for the crRNA-Cas12m complex. Probably required for pre-crRNA processing to mature crRNA. The polypeptide is CRISPR-associated DNA-binding protein Cas12m (Gordonia otitidis (strain DSM 44809 / CCUG 52243 / JCM 12355 / NBRC 100426 / IFM 10032)).